A 37-amino-acid polypeptide reads, in one-letter code: Esculentin-2A (37 aa).

Cys31 and Cys37 are oxidised to a cystine.

This sequence belongs to the frog skin active peptide (FSAP) family. Esculentin subfamily. Expressed by the skin glands.

It is found in the secreted. Functionally, shows antibacterial activity against representative Gram-negative and Gram-positive bacterial species, and hemolytic activity. The polypeptide is Esculentin-2A (Pelophylax lessonae (Pool frog)).